Here is a 291-residue protein sequence, read N- to C-terminus: Hydroxysteroid 11-beta-dehydrogenase 1-like protein B (291 aa).

Residues 1 to 17 (MAGVILLLLSLCVGYIA) form the signal peptide. NADP(+) contacts are provided by residues 40-66 (GSST…TARR), 91-92 (DM), and 118-120 (NHI). A substrate-binding site is contributed by serine 170. Catalysis depends on tyrosine 183, which acts as the Proton acceptor. NADP(+)-binding positions include 183–187 (YCASK) and 216–222 (GYIDTEN).

It belongs to the short-chain dehydrogenases/reductases (SDR) family.

It localises to the secreted. The enzyme catalyses cortisone + NADPH + H(+) = cortisol + NADP(+). Its function is as follows. Unidirectional NADP(+)-dependent cortisol dehydrogenase (in vitro). The sequence is that of Hydroxysteroid 11-beta-dehydrogenase 1-like protein B (hsd11b1l-b) from Xenopus laevis (African clawed frog).